The primary structure comprises 349 residues: Phenylalanine--tRNA ligase alpha subunit (349 aa).

Residue Glu-259 participates in Mg(2+) binding.

The protein belongs to the class-II aminoacyl-tRNA synthetase family. Phe-tRNA synthetase alpha subunit type 1 subfamily. As to quaternary structure, tetramer of two alpha and two beta subunits. Requires Mg(2+) as cofactor.

Its subcellular location is the cytoplasm. The catalysed reaction is tRNA(Phe) + L-phenylalanine + ATP = L-phenylalanyl-tRNA(Phe) + AMP + diphosphate + H(+). This chain is Phenylalanine--tRNA ligase alpha subunit, found in Lactobacillus acidophilus (strain ATCC 700396 / NCK56 / N2 / NCFM).